A 220-amino-acid chain; its full sequence is Ribose-5-phosphate isomerase A (220 aa).

Substrate-binding positions include 25 to 28 (TGST), 80 to 83 (DGAD), and 93 to 96 (KGGG). The active-site Proton acceptor is the glutamate 102. Residue lysine 120 participates in substrate binding.

Belongs to the ribose 5-phosphate isomerase family. Homodimer.

The enzyme catalyses aldehydo-D-ribose 5-phosphate = D-ribulose 5-phosphate. The protein operates within carbohydrate degradation; pentose phosphate pathway; D-ribose 5-phosphate from D-ribulose 5-phosphate (non-oxidative stage): step 1/1. In terms of biological role, catalyzes the reversible conversion of ribose-5-phosphate to ribulose 5-phosphate. The protein is Ribose-5-phosphate isomerase A of Bacillus anthracis.